The sequence spans 180 residues: Large ribosomal subunit protein uL6 (180 aa).

It belongs to the universal ribosomal protein uL6 family. As to quaternary structure, part of the 50S ribosomal subunit.

Its function is as follows. This protein binds to the 23S rRNA, and is important in its secondary structure. It is located near the subunit interface in the base of the L7/L12 stalk, and near the tRNA binding site of the peptidyltransferase center. The chain is Large ribosomal subunit protein uL6 from Lachnoclostridium phytofermentans (strain ATCC 700394 / DSM 18823 / ISDg) (Clostridium phytofermentans).